The chain runs to 155 residues: Ribosomal RNA large subunit methyltransferase H (155 aa).

Residues Leu-73, Gly-104, and 123–128 (LSPLTL) contribute to the S-adenosyl-L-methionine site.

Belongs to the RNA methyltransferase RlmH family. In terms of assembly, homodimer.

It localises to the cytoplasm. It carries out the reaction pseudouridine(1915) in 23S rRNA + S-adenosyl-L-methionine = N(3)-methylpseudouridine(1915) in 23S rRNA + S-adenosyl-L-homocysteine + H(+). In terms of biological role, specifically methylates the pseudouridine at position 1915 (m3Psi1915) in 23S rRNA. The polypeptide is Ribosomal RNA large subunit methyltransferase H (Pseudomonas putida (strain ATCC 700007 / DSM 6899 / JCM 31910 / BCRC 17059 / LMG 24140 / F1)).